Here is a 288-residue protein sequence, read N- to C-terminus: Bifunctional protein FolD 1 (288 aa).

Residues 170 to 172 and Ile-236 each bind NADP(+); that span reads GPG.

This sequence belongs to the tetrahydrofolate dehydrogenase/cyclohydrolase family. In terms of assembly, homodimer.

The enzyme catalyses (6R)-5,10-methylene-5,6,7,8-tetrahydrofolate + NADP(+) = (6R)-5,10-methenyltetrahydrofolate + NADPH. The catalysed reaction is (6R)-5,10-methenyltetrahydrofolate + H2O = (6R)-10-formyltetrahydrofolate + H(+). Its pathway is one-carbon metabolism; tetrahydrofolate interconversion. Its function is as follows. Catalyzes the oxidation of 5,10-methylenetetrahydrofolate to 5,10-methenyltetrahydrofolate and then the hydrolysis of 5,10-methenyltetrahydrofolate to 10-formyltetrahydrofolate. The sequence is that of Bifunctional protein FolD 1 from Deinococcus geothermalis (strain DSM 11300 / CIP 105573 / AG-3a).